Consider the following 658-residue polypeptide: Protein CFAP20DC (658 aa).

2 disordered regions span residues 312–522 and 589–634; these read QQGE…EEEY and PVNQ…LDSS. Polar residues predominate over residues 319-328; that stretch reads SHPVKQTTPL. Basic and acidic residues predominate over residues 339-349; it reads PPRDPSADKGS. 2 stretches are compositionally biased toward low complexity: residues 351 to 363 and 417 to 434; these read RRGL…SGSR and SSGP…LLLD. Residues 494-506 show a composition bias toward basic and acidic residues; it reads DPKEDSRVTKGDT. Acidic residues predominate over residues 507–521; the sequence is ELEDDFYGSDSSEEE. Over residues 625–634 the composition is skewed to polar residues; the sequence is QPLEQSLDSS.

The sequence is that of Protein CFAP20DC from Rattus norvegicus (Rat).